A 127-amino-acid chain; its full sequence is Glycine cleavage system H protein (127 aa).

Residues 24–105 (TALVGITDFA…YNEGWIVKMK (82 aa)) enclose the Lipoyl-binding domain. The residue at position 65 (Lys-65) is an N6-lipoyllysine.

It belongs to the GcvH family. In terms of assembly, the glycine cleavage system is composed of four proteins: P, T, L and H. (R)-lipoate is required as a cofactor.

Functionally, the glycine cleavage system catalyzes the degradation of glycine. The H protein shuttles the methylamine group of glycine from the P protein to the T protein. The protein is Glycine cleavage system H protein of Chlorobaculum tepidum (strain ATCC 49652 / DSM 12025 / NBRC 103806 / TLS) (Chlorobium tepidum).